The chain runs to 107 residues: Nucleoid-associated protein Xfasm12_1216 (107 aa).

The protein belongs to the YbaB/EbfC family. In terms of assembly, homodimer.

The protein resides in the cytoplasm. Its subcellular location is the nucleoid. Functionally, binds to DNA and alters its conformation. May be involved in regulation of gene expression, nucleoid organization and DNA protection. This chain is Nucleoid-associated protein Xfasm12_1216, found in Xylella fastidiosa (strain M12).